The following is a 493-amino-acid chain: Dipeptidase 3 (493 aa).

The N-terminal stretch at 1–35 (MQPAGLEGPRALGLRPLGHRLSLLGVLLLVPSLWV) is a signal peptide. Residues 41–60 (TPSPSSAPTTPEASNATTAP) are compositionally biased toward low complexity. The tract at residues 41–74 (TPSPSSAPTTPEASNATTAPGIPNDTATSGVTSD) is disordered. 2 disulfides stabilise this stretch: C143/C222 and C294/C326. An N-linked (GlcNAc...) asparagine glycan is attached at N331. Residue S462 is the site of GPI-anchor amidated serine attachment. Positions 463–493 (KAPPHPLPGLMATLTSLALILWLCCSGHRAV) are cleaved as a propeptide — removed in mature form.

This sequence belongs to the metallo-dependent hydrolases superfamily. Peptidase M19 family. As to quaternary structure, homodimer; disulfide-linked. Interacts with TEX101; co-localized on the cell surface of spermatocytes, spermatids, and testicular spermatozoa, co-localized only in cytoplasmic droplets of caput and corpus epididymal sperm. In terms of tissue distribution, expressed in testis but not ovary.

Its subcellular location is the membrane. In terms of biological role, lacks dipeptidase activity and is unable to hydrolyze cystinyl-bis-glycine. The absence of activity may be due to the inability of serine (instead of aspartate found in DPEP1/2) at position 356 to function as the acid/base catalyst and activate the nucleophilic water/hydroxide. Does not hydrolyze leukotriene D4 (LTD4) into leukotriene E4 (LTE4). Does not hydrolyze the beta-lactam antibiotic imipenem. The polypeptide is Dipeptidase 3 (Dpep3) (Mus musculus (Mouse)).